We begin with the raw amino-acid sequence, 279 residues long: Energy-coupling factor transporter ATP-binding protein EcfA1 (279 aa).

Residues 5-240 form the ABC transporter domain; it reads IELKKVTFNY…GDELLQLGLD (236 aa). 40–47 contributes to the ATP binding site; it reads GHNGSGKS.

This sequence belongs to the ABC transporter superfamily. Energy-coupling factor EcfA family. As to quaternary structure, forms a stable energy-coupling factor (ECF) transporter complex composed of 2 membrane-embedded substrate-binding proteins (S component), 2 ATP-binding proteins (A component) and 2 transmembrane proteins (T component).

It localises to the cell membrane. Functionally, ATP-binding (A) component of a common energy-coupling factor (ECF) ABC-transporter complex. Unlike classic ABC transporters this ECF transporter provides the energy necessary to transport a number of different substrates. The chain is Energy-coupling factor transporter ATP-binding protein EcfA1 from Streptococcus pyogenes serotype M12 (strain MGAS2096).